The sequence spans 113 residues: UPF0122 protein LAF_1235 (113 aa).

This sequence belongs to the UPF0122 family.

Its function is as follows. Might take part in the signal recognition particle (SRP) pathway. This is inferred from the conservation of its genetic proximity to ftsY/ffh. May be a regulatory protein. This chain is UPF0122 protein LAF_1235, found in Limosilactobacillus fermentum (strain NBRC 3956 / LMG 18251) (Lactobacillus fermentum).